The following is a 417-amino-acid chain: Serine hydroxymethyltransferase (417 aa).

(6S)-5,6,7,8-tetrahydrofolate contacts are provided by residues leucine 122 and 126–128; that span reads GHL. Position 231 is an N6-(pyridoxal phosphate)lysine (lysine 231).

Belongs to the SHMT family. In terms of assembly, homodimer. Pyridoxal 5'-phosphate is required as a cofactor.

It is found in the cytoplasm. It catalyses the reaction (6R)-5,10-methylene-5,6,7,8-tetrahydrofolate + glycine + H2O = (6S)-5,6,7,8-tetrahydrofolate + L-serine. It participates in one-carbon metabolism; tetrahydrofolate interconversion. Its pathway is amino-acid biosynthesis; glycine biosynthesis; glycine from L-serine: step 1/1. Its function is as follows. Catalyzes the reversible interconversion of serine and glycine with tetrahydrofolate (THF) serving as the one-carbon carrier. This reaction serves as the major source of one-carbon groups required for the biosynthesis of purines, thymidylate, methionine, and other important biomolecules. Also exhibits THF-independent aldolase activity toward beta-hydroxyamino acids, producing glycine and aldehydes, via a retro-aldol mechanism. The polypeptide is Serine hydroxymethyltransferase (Caldicellulosiruptor saccharolyticus (strain ATCC 43494 / DSM 8903 / Tp8T 6331)).